We begin with the raw amino-acid sequence, 317 residues long: Small ribosomal subunit protein RACK1 (317 aa).

WD repeat units follow at residues 15–55 (GHNG…DNQY), 64–103 (GHSH…TTQR), 106–146 (GHKG…ATLT), 148–188 (HNDW…VNAD), 191–230 (GHTG…TLYT), 232–272 (EAKA…DELK), and 281–317 (AKDP…TPSA).

This sequence belongs to the WD repeat G protein beta family. Ribosomal protein RACK1 subfamily. As to quaternary structure, component of the small ribosomal subunit. Mature ribosomes consist of a small (40S) and a large (60S) subunit. The 40S subunit contains about 32 different proteins and 1 molecule of RNA (18S). The 60S subunit contains 45 different proteins and 3 molecules of RNA (25S, 5.8S and 5S).

The protein resides in the cytoplasm. Functionally, component of the ribosome, a large ribonucleoprotein complex responsible for the synthesis of proteins in the cell. The small ribosomal subunit (SSU) binds messenger RNAs (mRNAs) and translates the encoded message by selecting cognate aminoacyl-transfer RNA (tRNA) molecules. The large subunit (LSU) contains the ribosomal catalytic site termed the peptidyl transferase center (PTC), which catalyzes the formation of peptide bonds, thereby polymerizing the amino acids delivered by tRNAs into a polypeptide chain. The nascent polypeptides leave the ribosome through a tunnel in the LSU and interact with protein factors that function in enzymatic processing, targeting, and the membrane insertion of nascent chains at the exit of the ribosomal tunnel. Located at the head of the 40S ribosomal subunit in the vicinity of the mRNA exit channel, it serves as a scaffold protein that can recruit other proteins to the ribosome. Involved in the negative regulation of translation of a specific subset of proteins. Plays a role in morphogenesis and pathogenesis. The protein is Small ribosomal subunit protein RACK1 of Candida albicans (strain SC5314 / ATCC MYA-2876) (Yeast).